A 567-amino-acid chain; its full sequence is Malate synthase, glyoxysomal (567 aa).

Catalysis depends on arginine 182, which acts as the Proton acceptor. Aspartate 468 (proton donor) is an active-site residue. The Microbody targeting signal signature appears at 565 to 567; it reads SRL.

This sequence belongs to the malate synthase family.

The protein localises to the glyoxysome. The catalysed reaction is glyoxylate + acetyl-CoA + H2O = (S)-malate + CoA + H(+). It participates in carbohydrate metabolism; glyoxylate cycle; (S)-malate from isocitrate: step 2/2. This Ricinus communis (Castor bean) protein is Malate synthase, glyoxysomal.